Here is a 1960-residue protein sequence, read N- to C-terminus: Myosin-9 (1960 aa).

A2 carries the post-translational modification N-acetylalanine. Residues 2–838 (AQQAADKYLY…RLFTKVKPLL (837 aa)) form a mediates interaction with LIMCH1 region. K8 carries the post-translational modification N6-acetyllysine. Residue Y11 is modified to Phosphotyrosine. Positions 27-77 (AAKKLVWVPSDKSGFEPASLKEEVGEEAIVELVENGKKVKVNKDDIQKMNP) constitute a Myosin N-terminal SH3-like domain. Residues 81–776 (SKVEDMAELT…VLAHLEEERD (696 aa)) enclose the Myosin motor domain. An N6-acetyllysine modification is found at K102. Residue 174–181 (GESGAGKT) coordinates ATP. K299, K435, and K613 each carry N6-acetyllysine. S628 carries the post-translational modification Phosphoserine. The actin-binding stretch occupies residues 654–676 (LAKLMATLRNTNPNFVRCIIPNH). A Phosphotyrosine modification is found at Y754. Residues 779–808 (ITDVIIGFQACCRGYLARKAFAKRQQQLTA) enclose the IQ domain. Residues 837–1926 (LLQVSRQEEE…LKNKLRRGDL (1090 aa)) are a coiled coil. N6-succinyllysine is present on K850. An N6-acetyllysine mark is found at K860, K975, and K1024. Position 1114 is a phosphoserine (S1114). Residues 1117–1137 (QEDLESERASRNKAEKQKRDL) form a disordered region. Over residues 1122–1137 (SERASRNKAEKQKRDL) the composition is skewed to basic and acidic residues. An N6-acetyllysine mark is found at K1234, K1249, K1357, K1392, K1404, K1410, K1459, and K1638. Position 1669 is an N6-succinyllysine (K1669). S1714 carries the phosphoserine modification. 3 positions are modified to N6-acetyllysine: K1793, K1802, and K1845. A disordered region spans residues 1877–1918 (RQLEEAEEEAQRANASRRKLQRELEDATETADAMNREVSSLK). R1923 carries the post-translational modification Omega-N-methylarginine. Residues 1934–1960 (VARKGAGDCSDEEVDGKADGAEAKAAE) are disordered. Residue S1943 is modified to Phosphoserine. Over residues 1948–1960 (DGKADGAEAKAAE) the composition is skewed to basic and acidic residues.

Belongs to the TRAFAC class myosin-kinesin ATPase superfamily. Myosin family. In terms of assembly, myosin is a hexameric protein that consists of 2 heavy chain subunits (MHC), 2 alkali light chain subunits (MLC) and 2 regulatory light chain subunits (MLC-2). Interacts with RASIP1. Interacts with DDR1. Interacts with PDLIM2. Interacts with SVIL. Interacts with HTRA3. Interacts with Myo7a. Interacts with CFAP95. Interacts with LIMCH1; independently of the integration of MYH9 into the myosin complex. Interacts with RAB3A. Interacts with ZBED4. Interacts with S100A4; this interaction increases cell motility. ISGylated. Post-translationally, ubiquitination.

It is found in the cytoplasm. Its subcellular location is the cytoskeleton. The protein resides in the cell cortex. The protein localises to the cytoplasmic vesicle. It localises to the secretory vesicle. It is found in the cortical granule. Cellular myosin that appears to play a role in cytokinesis, cell shape, and specialized functions such as secretion and capping. Required for cortical actin clearance prior to oocyte exocytosis. Promotes cell motility in conjunction with S100A4. During cell spreading, plays an important role in cytoskeleton reorganization, focal contact formation (in the margins but not the central part of spreading cells), and lamellipodial retraction; this function is mechanically antagonized by MYH10. This is Myosin-9 (MYH9) from Canis lupus familiaris (Dog).